A 162-amino-acid polypeptide reads, in one-letter code: Crossover junction endodeoxyribonuclease RuvC (162 aa).

Residues aspartate 8, glutamate 69, and histidine 141 contribute to the active site. Mg(2+) contacts are provided by aspartate 8, glutamate 69, and histidine 141.

The protein belongs to the RuvC family. As to quaternary structure, homodimer which binds Holliday junction (HJ) DNA. The HJ becomes 2-fold symmetrical on binding to RuvC with unstacked arms; it has a different conformation from HJ DNA in complex with RuvA. In the full resolvosome a probable DNA-RuvA(4)-RuvB(12)-RuvC(2) complex forms which resolves the HJ. The cofactor is Mg(2+).

Its subcellular location is the cytoplasm. It catalyses the reaction Endonucleolytic cleavage at a junction such as a reciprocal single-stranded crossover between two homologous DNA duplexes (Holliday junction).. Functionally, the RuvA-RuvB-RuvC complex processes Holliday junction (HJ) DNA during genetic recombination and DNA repair. Endonuclease that resolves HJ intermediates. Cleaves cruciform DNA by making single-stranded nicks across the HJ at symmetrical positions within the homologous arms, yielding a 5'-phosphate and a 3'-hydroxyl group; requires a central core of homology in the junction. The consensus cleavage sequence is 5'-(A/T)TT(C/G)-3'. Cleavage occurs on the 3'-side of the TT dinucleotide at the point of strand exchange. HJ branch migration catalyzed by RuvA-RuvB allows RuvC to scan DNA until it finds its consensus sequence, where it cleaves and resolves the cruciform DNA. The chain is Crossover junction endodeoxyribonuclease RuvC from Wolbachia sp. subsp. Drosophila simulans (strain wRi).